A 298-amino-acid polypeptide reads, in one-letter code: tRNA pseudouridine synthase B (298 aa).

Aspartate 46 acts as the Nucleophile in catalysis.

This sequence belongs to the pseudouridine synthase TruB family. Type 1 subfamily.

It carries out the reaction uridine(55) in tRNA = pseudouridine(55) in tRNA. Its function is as follows. Responsible for synthesis of pseudouridine from uracil-55 in the psi GC loop of transfer RNAs. The sequence is that of tRNA pseudouridine synthase B from Paracoccus denitrificans (strain Pd 1222).